We begin with the raw amino-acid sequence, 243 residues long: Triosephosphate isomerase (243 aa).

A substrate-binding site is contributed by 9–11 (NWK). His96 (electrophile) is an active-site residue. Residue Glu165 is the Proton acceptor of the active site. Substrate contacts are provided by residues Gly171, Ser204, and 225–226 (GG).

The protein belongs to the triosephosphate isomerase family. As to quaternary structure, homodimer.

It localises to the cytoplasm. It catalyses the reaction D-glyceraldehyde 3-phosphate = dihydroxyacetone phosphate. It functions in the pathway carbohydrate biosynthesis; gluconeogenesis. Its pathway is carbohydrate degradation; glycolysis; D-glyceraldehyde 3-phosphate from glycerone phosphate: step 1/1. Functionally, involved in the gluconeogenesis. Catalyzes stereospecifically the conversion of dihydroxyacetone phosphate (DHAP) to D-glyceraldehyde-3-phosphate (G3P). The protein is Triosephosphate isomerase of Prochlorococcus marinus (strain MIT 9211).